We begin with the raw amino-acid sequence, 450 residues long: Phosphoglucosamine mutase 2 (450 aa).

Residue serine 101 is the Phosphoserine intermediate of the active site. Mg(2+)-binding residues include serine 101, aspartate 245, aspartate 247, and aspartate 249. At serine 101 the chain carries Phosphoserine.

This sequence belongs to the phosphohexose mutase family. Requires Mg(2+) as cofactor. Post-translationally, activated by phosphorylation.

It carries out the reaction alpha-D-glucosamine 1-phosphate = D-glucosamine 6-phosphate. Catalyzes the conversion of glucosamine-6-phosphate to glucosamine-1-phosphate. This Shewanella sp. (strain MR-7) protein is Phosphoglucosamine mutase 2.